A 210-amino-acid polypeptide reads, in one-letter code: Glutathione S-transferase 2 (210 aa).

The 80-residue stretch at methionine 1 to asparagine 80 folds into the GST N-terminal domain. Glutathione contacts are provided by residues serine 9, histidine 50–isoleucine 52, and glutamate 64–arginine 66. A GST C-terminal domain is found at cysteine 87–phenylalanine 208.

Belongs to the GST superfamily. Theta family. As to quaternary structure, homodimer.

It catalyses the reaction RX + glutathione = an S-substituted glutathione + a halide anion + H(+). In terms of biological role, conjugation of reduced glutathione to a wide number of exogenous and endogenous hydrophobic electrophiles. The sequence is that of Glutathione S-transferase 2 (Gst2) from Musca domestica (House fly).